A 377-amino-acid chain; its full sequence is MTTQFSVAGIELELFRYPASQESNLQAWDAADEHLINSLIEGGQIAVPTAIINDSFGALSCALSRINPNWPLRVETDARTSFLGTEQNHHRNQLPMDNLQWFTSRDTLPKDVALVLMKLPKNLTYFAHQLMRLSQILPAGCRVLVGAKAKSINSSLLALFAKHLGPANASLAWKKTRVITCISDGKPRALPNGITWNIPEFNLTISNLSNVFAANKLDIGARIMLDNLPQGKFNTVVDLGCGNGVLGLRAAQLYPNADIHFIDDSEMAVASAKANWTMNQLAEGKGHFHWDDCMTHLPEDIEPDLVLCNPPFHQGEAITDHIAWQMFLDARRRLKNGGILHIVGNRHLAYHVKLQRLFKNCTTVASNGKFVILQAQK.

The protein belongs to the methyltransferase superfamily. RlmG family.

It localises to the cytoplasm. The enzyme catalyses guanosine(1835) in 23S rRNA + S-adenosyl-L-methionine = N(2)-methylguanosine(1835) in 23S rRNA + S-adenosyl-L-homocysteine + H(+). Functionally, specifically methylates the guanine in position 1835 (m2G1835) of 23S rRNA. This Shewanella oneidensis (strain ATCC 700550 / JCM 31522 / CIP 106686 / LMG 19005 / NCIMB 14063 / MR-1) protein is Ribosomal RNA large subunit methyltransferase G.